A 341-amino-acid polypeptide reads, in one-letter code: S-adenosylmethionine:tRNA ribosyltransferase-isomerase (341 aa).

It belongs to the QueA family. In terms of assembly, monomer.

It localises to the cytoplasm. The enzyme catalyses 7-aminomethyl-7-carbaguanosine(34) in tRNA + S-adenosyl-L-methionine = epoxyqueuosine(34) in tRNA + adenine + L-methionine + 2 H(+). It participates in tRNA modification; tRNA-queuosine biosynthesis. Functionally, transfers and isomerizes the ribose moiety from AdoMet to the 7-aminomethyl group of 7-deazaguanine (preQ1-tRNA) to give epoxyqueuosine (oQ-tRNA). The polypeptide is S-adenosylmethionine:tRNA ribosyltransferase-isomerase (Clostridium kluyveri (strain NBRC 12016)).